Here is a 250-residue protein sequence, read N- to C-terminus: Aquaporin TIP1-1 (250 aa).

Transmembrane regions (helical) follow at residues 24–44 (FAEFISTLIFVFAGQGSGMAF) and 56–76 (AGLIAAAVAHAFALFVAVSVG). Residues 85-87 (NPA) carry the NPA 1 motif. Helical transmembrane passes span 104-126 (LLYWVAQLLGSTVACFLLRFSTG), 143-163 (ALVLEIVMTFGLVYTVYATAV), and 172-192 (TIAPIAIGFIVGANILVGGAF). Residues 198–200 (NPA) carry the NPA 2 motif. The chain crosses the membrane as a helical span at residues 218 to 238 (YWVGPLIGGGLAGVIYELLFI).

This sequence belongs to the MIP/aquaporin (TC 1.A.8) family. TIP (TC 1.A.8.10) subfamily. As to expression, expressed in roots, shoots, leaves, tassels, ears and embryos. Expressed in meristems and zones of cell enlargement: tips of primary and lateral roots, leaf primordia, and male and female inflorescence meristems. Highly expressed in the root epidermis and endodermis, parenchyma cells surrounding mature xylem vessels in the root and the stem, phloem companion cells and a ring of cells around the phloem strand in the stem and the leaf sheath, and the basal endosperm transfer cells in developing kernels.

The protein resides in the vacuole membrane. Water channel required to facilitate the transport of water across cell membrane. May support the rapid influx of water into vacuoles during cell expansion, permit osmotic equilibration between the cytosol and the vacuolar content and rapid transcellular water flow through living cells. Its function is impaired by Hg(2+). This is Aquaporin TIP1-1 (TIP1-1) from Zea mays (Maize).